The sequence spans 473 residues: MALQTGEPRTLAEKIWDDHIVVSGGGCAPDLIYIDLHLVHEVTSPQAFDGLRLAGRRVRRPELTLATEDHNVPTVDIDQPIADPVSRTQVETLRRNCAEFGIRLHSMGDIEQGIVHVVGPQLGLTQPGMTIVCGDSHTSTHGAFGALAMGIGTSEVEHVLATQTLPLRPFKTMAVNVDGRLPDGVSAKDIILALIAKIGTGGGQGHVIEYRGSAIESLSMEGRMTICNMSIEAGARAGMVAPDETTYAFLRGRPHAPTGAQWDTALVYWQRLRTDVGAVFDTEVYLDAASLSPFVTWGTNPGQGVPLAAAVPDPQLMTDDAERQAAEKALAYMDLRPGTAMREIAVDAVFVGSCTNGRIEDLRVVAEVLRGRKVADGVRMLIVPGSMRVRAQAEAEGLGEIFTDAGAQWRQAGCSMCLGMNPDQLASGERCAATSNRNFEGRQGAGGRTHLVSPAVAAATAVRGTLSSPADLN.

Positions 354, 414, and 417 each coordinate [4Fe-4S] cluster.

Belongs to the aconitase/IPM isomerase family. LeuC type 1 subfamily. Heterodimer of LeuC and LeuD. [4Fe-4S] cluster serves as cofactor.

The catalysed reaction is (2R,3S)-3-isopropylmalate = (2S)-2-isopropylmalate. Its pathway is amino-acid biosynthesis; L-leucine biosynthesis; L-leucine from 3-methyl-2-oxobutanoate: step 2/4. Catalyzes the isomerization between 2-isopropylmalate and 3-isopropylmalate, via the formation of 2-isopropylmaleate. This chain is 3-isopropylmalate dehydratase large subunit, found in Mycobacterium bovis (strain ATCC BAA-935 / AF2122/97).